The chain runs to 416 residues: Adenylosuccinate synthetase (416 aa).

Residues 13 to 19 (GDEGKGK) and 41 to 43 (GHT) each bind GTP. Asp-14 acts as the Proton acceptor in catalysis. Mg(2+) contacts are provided by Asp-14 and Gly-41. Residues 14–17 (DEGK), 39–42 (NAGH), Thr-126, Arg-140, Gln-220, Thr-235, and Arg-299 each bind IMP. The active-site Proton donor is the His-42. 295 to 301 (VSTGRKR) contacts substrate. GTP contacts are provided by residues Arg-301, 327–329 (KLD), and 405–407 (STS).

It belongs to the adenylosuccinate synthetase family. Homodimer. Requires Mg(2+) as cofactor.

Its subcellular location is the cytoplasm. The enzyme catalyses IMP + L-aspartate + GTP = N(6)-(1,2-dicarboxyethyl)-AMP + GDP + phosphate + 2 H(+). It participates in purine metabolism; AMP biosynthesis via de novo pathway; AMP from IMP: step 1/2. Plays an important role in the de novo pathway of purine nucleotide biosynthesis. Catalyzes the first committed step in the biosynthesis of AMP from IMP. This is Adenylosuccinate synthetase from Campylobacter jejuni subsp. jejuni serotype O:23/36 (strain 81-176).